A 160-amino-acid chain; its full sequence is Bursicon (160 aa).

The first 20 residues, 1–20, serve as a signal peptide directing secretion; it reads MSVLNTFLVIVALILCYVND. The CTCK domain occupies 38-131; that stretch reads CQECQMTAVI…PLQCMCRPCG (94 aa). Intrachain disulfides connect Cys-41-Cys-90, Cys-55-Cys-104, Cys-65-Cys-125, Cys-69-Cys-127, and Cys-87-Cys-130.

Heterodimer of burs and pburs.

Its subcellular location is the secreted. Final heterodimeric neurohormone released at the end of the molting cycle, involved in the sclerotization (tanning) of the insect cuticle, melanization and wing spreading. This is Bursicon from Bombyx mori (Silk moth).